The following is a 792-amino-acid chain: Ubiquitin carboxyl-terminal hydrolase 10 (792 aa).

A DHR2-binding module region spans residues 2–27 (TTQESIKPLVDRILSNPLQFNAAMIS). 2 disordered regions span residues 64-87 (AESK…NTVP) and 103-320 (KDAA…SITP). A compositionally biased stretch (low complexity) spans 107-129 (DATGAKKSAELSTELSTEPPSSS). The segment at 109–145 (TGAKKSAELSTELSTEPPSSSSEDDKVGKEEEEEGEI) is SIR4-binding module. Residues 144–171 (EIFHEARDYVEPRKASLKERDNADKGDG) are compositionally biased toward basic and acidic residues. A UTP22-binding module region spans residues 167–208 (DKGDGEDIGEDIGEDIGEDIGEDIGEDIGENLGSPLATIDDS). Residues 172 to 195 (EDIGEDIGEDIGEDIGEDIGEDIG) show a composition bias toward acidic residues. Residues 211–220 (ENEKEKRKEL) are compositionally biased toward basic and acidic residues. The segment covering 226–241 (SDDEIEDDEDEDDMDY) has biased composition (acidic residues). Residues 288–297 (VNNTKENGNR) are compositionally biased toward polar residues. A USP domain is found at 362–733 (RGLLNHGVTC…NAYYLLYTRL (372 aa)). Residue C371 is the Nucleophile of the active site. The tract at residues 526–563 (LDPNSDLSSDSINGTSATTSTTTSNAATKPSLSSSSSV) is disordered. The segment covering 530–539 (SDLSSDSING) has biased composition (polar residues). Low complexity predominate over residues 540 to 563 (TSATTSTTTSNAATKPSLSSSSSV). The Proton acceptor role is filled by H691. Residues 749–766 (TGNVTSKSKQEQAVNEPN) are compositionally biased toward polar residues. The segment at 749–792 (TGNVTSKSKQEQAVNEPNNRPLKINSKKNNRKKWKKNKKRKFTK) is disordered. The segment covering 773–792 (NSKKNNRKKWKKNKKRKFTK) has biased composition (basic residues).

This sequence belongs to the peptidase C19 family. Interacts with SIR4. Interacts with the proliferating-cell nuclear antigen PCNA/POL30. Interacts with DHR2 and UTP22.

The protein resides in the nucleus. It is found in the chromosome. The protein localises to the telomere. Its subcellular location is the nucleolus. The catalysed reaction is Thiol-dependent hydrolysis of ester, thioester, amide, peptide and isopeptide bonds formed by the C-terminal Gly of ubiquitin (a 76-residue protein attached to proteins as an intracellular targeting signal).. Functionally, deubiquitinating enzyme involved in telomere and HM loci silencing, which is the repression of chromatin structure which leads to a stop in the transcription of nearby genes. Targets histone H2B for deubiquitination, thus helping to localize SIR2 to the telomere. At silent chromatin, including telomeres and the rDNA locus, not only maintains low H2B 'Lys-123' ubiquitination (H2BK123Ub), but also low H3 'Lys-4' and 'Lys-79' methylation (H3K4me and H3K79me, respectively). Controls the proliferating-cell nuclear antigen PCNA/POL30 deubiquitination which is crucial for keeping TLS polymerases in check as well as for down-regulating the error-free bypass. Deubiquitinates and stabilizes RPA190, the largest subunit of RNA polymerase I, to achieve optimal levels of ribosomes and cell growth. Also protects nutrient transporters such as GAP1 from ubiquitin-dependent endocytosis. In Saccharomyces cerevisiae (strain ATCC 204508 / S288c) (Baker's yeast), this protein is Ubiquitin carboxyl-terminal hydrolase 10 (UBP10).